We begin with the raw amino-acid sequence, 169 residues long: Peptide deformylase (169 aa).

Positions 91 and 133 each coordinate Fe cation. Glu-134 is a catalytic residue. Fe cation is bound at residue His-137.

It belongs to the polypeptide deformylase family. The cofactor is Fe(2+).

It carries out the reaction N-terminal N-formyl-L-methionyl-[peptide] + H2O = N-terminal L-methionyl-[peptide] + formate. In terms of biological role, removes the formyl group from the N-terminal Met of newly synthesized proteins. Requires at least a dipeptide for an efficient rate of reaction. N-terminal L-methionine is a prerequisite for activity but the enzyme has broad specificity at other positions. The protein is Peptide deformylase of Klebsiella pneumoniae (strain 342).